The chain runs to 297 residues: Calponin-1 (297 aa).

The Calponin-homology (CH) domain maps to 28–131 (HQREQELREW…STLLALASMA (104 aa)). Serine 48 carries the post-translational modification Phosphoserine. Calponin-like repeat units follow at residues 164-189 (IGLQ…RHLY), 204-229 (ISLQ…RQIF), and 243-268 (VSLQ…RQVY). Threonine 170 carries the post-translational modification Phosphothreonine; by ROCK2. Serine 175 carries the phosphoserine; by ROCK2 modification. Phosphothreonine; by ROCK2 occurs at positions 180 and 184. Threonine 259 carries the phosphothreonine; by ROCK2 modification.

It belongs to the calponin family. As to quaternary structure, part of cGMP kinase signaling complex at least composed of ACTA2/alpha-actin, CNN1/calponin H1, PLN/phospholamban, PRKG1 and ITPR1. As to expression, smooth muscle, and tissues containing significant amounts of smooth muscle.

Its function is as follows. Thin filament-associated protein that is implicated in the regulation and modulation of smooth muscle contraction. It is capable of binding to actin, calmodulin and tropomyosin. The interaction of calponin with actin inhibits the actomyosin Mg-ATPase activity. The sequence is that of Calponin-1 (Cnn1) from Rattus norvegicus (Rat).